We begin with the raw amino-acid sequence, 197 residues long: Orotate phosphoribosyltransferase (197 aa).

Residues Arg87, Lys91, His93, and Asp112–Ser120 contribute to the 5-phospho-alpha-D-ribose 1-diphosphate site. Orotate is bound by residues Thr116 and Arg144.

Belongs to the purine/pyrimidine phosphoribosyltransferase family. PyrE subfamily. As to quaternary structure, homodimer. It depends on Mg(2+) as a cofactor.

The enzyme catalyses orotidine 5'-phosphate + diphosphate = orotate + 5-phospho-alpha-D-ribose 1-diphosphate. It participates in pyrimidine metabolism; UMP biosynthesis via de novo pathway; UMP from orotate: step 1/2. In terms of biological role, catalyzes the transfer of a ribosyl phosphate group from 5-phosphoribose 1-diphosphate to orotate, leading to the formation of orotidine monophosphate (OMP). This chain is Orotate phosphoribosyltransferase, found in Sulfolobus acidocaldarius (strain ATCC 33909 / DSM 639 / JCM 8929 / NBRC 15157 / NCIMB 11770).